The following is a 400-amino-acid chain: Enoyl-[acyl-carrier-protein] reductase [NADH] (400 aa).

Residues 48 to 53 (GSSSGY), 74 to 75 (FE), 111 to 112 (DA), and 139 to 140 (LA) contribute to the NAD(+) site. Tyr225 contacts substrate. Catalysis depends on Tyr235, which acts as the Proton donor. NAD(+) is bound by residues Lys244 and 273–275 (VVT).

It belongs to the TER reductase family. Monomer.

The enzyme catalyses a 2,3-saturated acyl-[ACP] + NAD(+) = a (2E)-enoyl-[ACP] + NADH + H(+). The protein operates within lipid metabolism; fatty acid biosynthesis. Involved in the final reduction of the elongation cycle of fatty acid synthesis (FAS II). Catalyzes the reduction of a carbon-carbon double bond in an enoyl moiety that is covalently linked to an acyl carrier protein (ACP). This chain is Enoyl-[acyl-carrier-protein] reductase [NADH], found in Shewanella pealeana (strain ATCC 700345 / ANG-SQ1).